The following is a 317-amino-acid chain: MALRGWRLFGLAGTILVYIGGILFLSFVSLQSPQQKRNHARGYGEFETLRNRDLGLLGKKPPLQWCTELRYMDSPPPSPKAYKLLQTFPVNDGHQKSSNGRELTALVSFPGSGNTWLRYLLQQSTGILTGSVYKDYGLLKSGFPAENVANSSVLVVKTHEWGPQAWAPYGKAILLVRDPEKAILAEFNRQSGGHVGFASPDRYRRTKGRYWTQFVKNKLWAWEQTNLSWAKNFTGDVKLVFYDDLVENVEGTLRSILKFLNFPVNDELLACALMRKEGIYRRKKRILQFDPYSPAMHTAIDEKRSEVYAALGRFRSH.

The helical transmembrane segment at 8-28 threads the bilayer; it reads LFGLAGTILVYIGGILFLSFV. N-linked (GlcNAc...) asparagine glycans are attached at residues Asn-150, Asn-226, and Asn-232.

The protein belongs to the WSCD family.

The protein resides in the membrane. The sequence is that of WSCD family member AAEL009094 from Aedes aegypti (Yellowfever mosquito).